The primary structure comprises 205 residues: Thymidylate kinase (205 aa).

An ATP-binding site is contributed by 10–17 (GIDGAGKT).

It belongs to the thymidylate kinase family.

It carries out the reaction dTMP + ATP = dTDP + ADP. Phosphorylation of dTMP to form dTDP in both de novo and salvage pathways of dTTP synthesis. In Nitrosospira multiformis (strain ATCC 25196 / NCIMB 11849 / C 71), this protein is Thymidylate kinase.